The primary structure comprises 125 residues: Histone H2A (125 aa).

The span at 1–18 shows a compositional bias: basic residues; it reads MSGRGKGGKVKGKSKTRS. Positions 1-23 are disordered; it reads MSGRGKGGKVKGKSKTRSSRAGL. S2 carries the post-translational modification N-acetylserine. An N5-methylglutamine modification is found at Q104.

This sequence belongs to the histone H2A family. In terms of assembly, the nucleosome is a histone octamer containing two molecules each of H2A, H2B, H3 and H4 assembled in one H3-H4 heterotetramer and two H2A-H2B heterodimers. The octamer wraps approximately 147 bp of DNA.

It localises to the nucleus. The protein localises to the chromosome. Core component of nucleosome. Nucleosomes wrap and compact DNA into chromatin, limiting DNA accessibility to the cellular machineries which require DNA as a template. Histones thereby play a central role in transcription regulation, DNA repair, DNA replication and chromosomal stability. DNA accessibility is regulated via a complex set of post-translational modifications of histones, also called histone code, and nucleosome remodeling. The chain is Histone H2A from Sepia officinalis (Common cuttlefish).